The chain runs to 124 residues: Transcription initiation factor TFIID subunit 13 (124 aa).

The segment covering 1-16 (MADEEEDPTFEEENEE) has biased composition (acidic residues). Residues 1–28 (MADEEEDPTFEEENEEIGGGAEGGQGKR) are disordered. In terms of domain architecture, Histone-fold spans 32–74 (FSKELRCMMYGFGDDQNPYTESVDILEDLVIEFITEMTHKAMS).

The protein belongs to the TAF13 family. In terms of assembly, component of the TFIID basal transcription factor complex, composed of TATA-box-binding protein TBP, and a number of TBP-associated factors (TAFs), including TAF1, TAF2, TAF3, TAF4, TAF5, TAF6, TAF7, TAF8, TAF9, TAF10, TAF11, TAF12 and TAF13. Interacts with TBP, and more strongly with TAF10 and TAF11.

Its subcellular location is the nucleus. In terms of biological role, the TFIID basal transcription factor complex plays a major role in the initiation of RNA polymerase II (Pol II)-dependent transcription. TFIID recognizes and binds promoters via its subunit TBP, a TATA-box-binding protein, and promotes assembly of the pre-initiation complex (PIC). The TFIID complex consists of TBP and TBP-associated factors (TAFs), including TAF1, TAF2, TAF3, TAF4, TAF5, TAF6, TAF7, TAF8, TAF9, TAF10, TAF11, TAF12 and TAF13. TAF13, together with TAF11 and TBP, play key roles during promoter binding by the TFIID and TFIIA transcription factor complexes. The chain is Transcription initiation factor TFIID subunit 13 from Bos taurus (Bovine).